A 185-amino-acid chain; its full sequence is MTTPNKTPPGADPKQLERTGTVREIGSQAVWSLSSCKPGFGVDQLRDDNLETYWQSDGSQPHLVNLQFRRKTTVKTLCIYADYKSDESYTPSKISVRVGNNFHNLQEIRQLELVEPSGWIHVPLTDNHKKPTRTFMIQIAVLANHQNGRDTHMRQIKIYTPVEESSIGKFPRCTTIDFMMYRSIR.

Position 2 is an N-acetylthreonine (threonine 2). The region spanning 2–185 (TTPNKTPPGA…IDFMMYRSIR (184 aa)) is the DOC domain. Position 169 is an N6-acetyllysine (lysine 169).

The protein belongs to the APC10 family. The mammalian APC/C is composed at least of 14 distinct subunits ANAPC1, ANAPC2, CDC27/APC3, ANAPC4, ANAPC5, CDC16/APC6, ANAPC7, CDC23/APC8, ANAPC10, ANAPC11, CDC26/APC12, ANAPC13, ANAPC15 and ANAPC16 that assemble into a complex of at least 19 chains with a combined molecular mass of around 1.2 MDa; APC/C interacts with FZR1 and FBXO5. The C-terminus of APC10 binds to CDC27/APC3. Interacts with PIWIL1; interaction only takes place when PIWIL1 binds piRNA. Interacts with FBXO43; the interaction is direct.

The protein operates within protein modification; protein ubiquitination. Component of the anaphase promoting complex/cyclosome (APC/C), a cell cycle-regulated E3 ubiquitin ligase that controls progression through mitosis and the G1 phase of the cell cycle. The APC/C complex acts by mediating ubiquitination and subsequent degradation of target proteins: it mainly mediates the formation of 'Lys-11'-linked polyubiquitin chains and, to a lower extent, the formation of 'Lys-48'- and 'Lys-63'-linked polyubiquitin chains. The APC/C complex catalyzes assembly of branched 'Lys-11'-/'Lys-48'-linked branched ubiquitin chains on target proteins. This is Anaphase-promoting complex subunit 10 (ANAPC10) from Bos taurus (Bovine).